The chain runs to 798 residues: uncharacterized protein (798 aa).

The N-terminal stretch at 1–22 (MKFKYGAIVFSGLLGVSAILAA) is a signal peptide. C23 is lipidated: N-palmitoyl cysteine. Residue C23 is the site of S-diacylglycerol cysteine attachment. The segment covering 178–192 (SKGAQKDNKSAEVQR) has biased composition (basic and acidic residues). Disordered stretches follow at residues 178–204 (SKGA…TQPL), 226–260 (NGKK…ATSD), 443–463 (EVNA…QSDQ), and 478–515 (SDIK…TPKK). Residues 193–204 (KSTGQKTVTQPL) are compositionally biased toward polar residues. Positions 226 to 235 (NGKKKEEKKS) are enriched in basic and acidic residues. Basic and acidic residues predominate over residues 478 to 495 (SDIKVKPKTQAESKKSSD). A compositionally biased stretch (polar residues) spans 496–515 (SKQTANTGKGSNSKQQTPKK).

Belongs to the MG185/MG260 family.

The protein localises to the cell membrane. This is an uncharacterized protein from Mycoplasma pneumoniae (strain ATCC 29342 / M129 / Subtype 1) (Mycoplasmoides pneumoniae).